The chain runs to 661 residues: DNA ligase (661 aa).

Residues 31–35, 80–81, and E109 each bind NAD(+); these read DSGYD and SL. The active-site N6-AMP-lysine intermediate is K111. Positions 132, 167, 283, and 307 each coordinate NAD(+). Zn(2+) is bound by residues C401, C404, C419, and C424. The BRCT domain occupies 582-661; sequence AGEQLLQGKT…AGFLNLLGLS (80 aa).

This sequence belongs to the NAD-dependent DNA ligase family. LigA subfamily. Requires Mg(2+) as cofactor. Mn(2+) serves as cofactor.

It catalyses the reaction NAD(+) + (deoxyribonucleotide)n-3'-hydroxyl + 5'-phospho-(deoxyribonucleotide)m = (deoxyribonucleotide)n+m + AMP + beta-nicotinamide D-nucleotide.. DNA ligase that catalyzes the formation of phosphodiester linkages between 5'-phosphoryl and 3'-hydroxyl groups in double-stranded DNA using NAD as a coenzyme and as the energy source for the reaction. It is essential for DNA replication and repair of damaged DNA. This Syntrophomonas wolfei subsp. wolfei (strain DSM 2245B / Goettingen) protein is DNA ligase.